A 769-amino-acid chain; its full sequence is Wall-associated receptor kinase-like 10 (769 aa).

An N-terminal signal peptide occupies residues 1–24; the sequence is MSSNCSCSLLSLFSLLLIIDLTVA. Over 25–358 the chain is Extracellular; that stretch reads SSCPKTCGGI…YTCEYTNHRP (334 aa). N-linked (GlcNAc...) asparagine glycosylation is found at Asn-58, Asn-114, Asn-134, Asn-182, Asn-187, Asn-237, Asn-262, and Asn-296. Residues 291-351 form an atypical EGF-like region; that stretch reads CLCDYNSTTT…CVNLLGGYTC (61 aa). 3 disulfide bridges follow: Cys-293/Cys-305, Cys-327/Cys-342, and Cys-337/Cys-351. The helical transmembrane segment at 359–379 threads the bilayer; sequence LVIGLSTSFSTLVFIGGIYWL. The Cytoplasmic portion of the chain corresponds to 380–769; that stretch reads YKFIRRQRRL…RSDVEPLFPR (390 aa). One can recognise a Protein kinase domain in the interval 433-718; sequence FSLTRILGEG…SYSEDMQPYE (286 aa). ATP contacts are provided by residues 439-447 and Lys-461; that span reads LGEGGQGTV. Tyr-506 carries the phosphotyrosine modification. The Proton acceptor role is filled by Asp-559. Phosphothreonine occurs at positions 593 and 598. Position 606 is a phosphotyrosine (Tyr-606).

Belongs to the protein kinase superfamily. Ser/Thr protein kinase family.

The protein resides in the membrane. The catalysed reaction is L-seryl-[protein] + ATP = O-phospho-L-seryl-[protein] + ADP + H(+). It carries out the reaction L-threonyl-[protein] + ATP = O-phospho-L-threonyl-[protein] + ADP + H(+). Functionally, serine/threonine-protein kinase that may function as a signaling receptor of extracellular matrix component. This chain is Wall-associated receptor kinase-like 10 (WAKL10), found in Arabidopsis thaliana (Mouse-ear cress).